The sequence spans 144 residues: Large ribosomal subunit protein uL22 (144 aa).

Positions 1 to 38 (MAETQTTKKGAKRVRQPVPARRSKPNRPAKAAPGPHAS) are disordered. Positions 9–27 (KGAKRVRQPVPARRSKPNR) are enriched in basic residues.

The protein belongs to the universal ribosomal protein uL22 family. In terms of assembly, part of the 50S ribosomal subunit.

Functionally, this protein binds specifically to 23S rRNA; its binding is stimulated by other ribosomal proteins, e.g. L4, L17, and L20. It is important during the early stages of 50S assembly. It makes multiple contacts with different domains of the 23S rRNA in the assembled 50S subunit and ribosome. The globular domain of the protein is located near the polypeptide exit tunnel on the outside of the subunit, while an extended beta-hairpin is found that lines the wall of the exit tunnel in the center of the 70S ribosome. This chain is Large ribosomal subunit protein uL22, found in Anaeromyxobacter sp. (strain Fw109-5).